Here is a 158-residue protein sequence, read N- to C-terminus: Pycsar effector protein SaPycTM (158 aa).

3 helical membrane passes run phenylalanine 20–phenylalanine 40, isoleucine 53–valine 73, and valine 136–isoleucine 156.

It is found in the cell membrane. Its function is as follows. Pycsar (pyrimidine cyclase system for antiphage resistance) provides immunity against bacteriophage. The pyrimidine cyclase (PycC) synthesizes cyclic nucleotides in response to infection; these serve as specific second messenger signals. The signals activate the adjacent effector, leading to bacterial cell death and abortive phage infection. A clade E Pycsar system. In terms of biological role, the effector gene of a two-gene Pycsar system. Expression of this and adjacent SaPycC cytidylate cyclase (AC P0DV38) probably confers resistance to bacteriophage. The genes are probably only expressed in response to bacteriophage infection. Probably only responds to cCMP (produced by its cognate NTP cyclase), acts by impairing membrane integrity. The sequence is that of Pycsar effector protein SaPycTM from Staphylococcus aureus.